We begin with the raw amino-acid sequence, 535 residues long: Probable monogalactosyldiacylglycerol synthase, chloroplastic (535 aa).

The N-terminal 113 residues, 1 to 113 (MMQHSSSVTQ…KIPLGFASVG (113 aa)), are a transit peptide targeting the chloroplast.

This sequence belongs to the glycosyltransferase 28 family.

It localises to the plastid. Its subcellular location is the chloroplast membrane. It catalyses the reaction a 1,2-diacyl-sn-glycerol + UDP-alpha-D-galactose = a 1,2-diacyl-3-O-(beta-D-galactosyl)-sn-glycerol + UDP + H(+). Its function is as follows. Involved in the synthesis of the major structural component of photosynthetic membranes. The sequence is that of Probable monogalactosyldiacylglycerol synthase, chloroplastic (MGD A) from Nicotiana tabacum (Common tobacco).